Here is a 113-residue protein sequence, read N- to C-terminus: Hydrogenase maturation factor HypA (113 aa).

Position 2 (His-2) interacts with Ni(2+). The Zn(2+) site is built by Cys-73, Cys-76, Cys-89, and Cys-92.

Belongs to the HypA/HybF family.

In terms of biological role, involved in the maturation of [NiFe] hydrogenases. Required for nickel insertion into the metal center of the hydrogenase. This Aeromonas salmonicida (strain A449) protein is Hydrogenase maturation factor HypA.